Consider the following 144-residue polypeptide: Large ribosomal subunit protein uL11 (144 aa).

Belongs to the universal ribosomal protein uL11 family. In terms of assembly, part of the ribosomal stalk of the 50S ribosomal subunit. Interacts with L10 and the large rRNA to form the base of the stalk. L10 forms an elongated spine to which L12 dimers bind in a sequential fashion forming a multimeric L10(L12)X complex. In terms of processing, one or more lysine residues are methylated.

Its function is as follows. Forms part of the ribosomal stalk which helps the ribosome interact with GTP-bound translation factors. The chain is Large ribosomal subunit protein uL11 from Polaromonas naphthalenivorans (strain CJ2).